A 373-amino-acid chain; its full sequence is tRNA-specific 2-thiouridylase MnmA (373 aa).

Residues 12-19 and Met-38 contribute to the ATP site; that span reads GMSGGVDS. The segment at 98-100 is interaction with target base in tRNA; that stretch reads NPD. The active-site Nucleophile is the Cys-103. Cysteines 103 and 200 form a disulfide. Residue Gly-127 coordinates ATP. The interaction with tRNA stretch occupies residues 150-152; it reads KDQ. Cys-200 serves as the catalytic Cysteine persulfide intermediate. Residues 312–313 are interaction with tRNA; sequence RY.

Belongs to the MnmA/TRMU family.

The protein resides in the cytoplasm. The catalysed reaction is S-sulfanyl-L-cysteinyl-[protein] + uridine(34) in tRNA + AH2 + ATP = 2-thiouridine(34) in tRNA + L-cysteinyl-[protein] + A + AMP + diphosphate + H(+). Its function is as follows. Catalyzes the 2-thiolation of uridine at the wobble position (U34) of tRNA, leading to the formation of s(2)U34. The polypeptide is tRNA-specific 2-thiouridylase MnmA (Streptococcus agalactiae serotype Ia (strain ATCC 27591 / A909 / CDC SS700)).